The primary structure comprises 492 residues: ATP synthase subunit beta, chloroplastic (492 aa).

Gly-170–Thr-177 contributes to the ATP binding site.

Belongs to the ATPase alpha/beta chains family. In terms of assembly, F-type ATPases have 2 components, CF(1) - the catalytic core - and CF(0) - the membrane proton channel. CF(1) has five subunits: alpha(3), beta(3), gamma(1), delta(1), epsilon(1). CF(0) has four main subunits: a(1), b(1), b'(1) and c(9-12).

The protein resides in the plastid. It is found in the chloroplast thylakoid membrane. The catalysed reaction is ATP + H2O + 4 H(+)(in) = ADP + phosphate + 5 H(+)(out). In terms of biological role, produces ATP from ADP in the presence of a proton gradient across the membrane. The catalytic sites are hosted primarily by the beta subunits. This Psilotum nudum (Whisk fern) protein is ATP synthase subunit beta, chloroplastic.